A 108-amino-acid polypeptide reads, in one-letter code: LBH domain-containing protein 2 (108 aa).

Over residues 1–11 the composition is skewed to pro residues; the sequence is MSTPRPAPPQP. Residues 1–108 form a disordered region; that stretch reads MSTPRPAPPQ…SEDPAAPARG (108 aa). The LBH domain occupies 37–62; it reads QRLPSIVVEPSEADPVESGELRWPLE. Positions 63 to 85 are enriched in low complexity; the sequence is SAQRGPSQSRAAAAPSPSLPGEP.

In Homo sapiens (Human), this protein is LBH domain-containing protein 2.